The following is a 618-amino-acid chain: Chaperone protein DnaK (618 aa).

Residue threonine 175 is modified to Phosphothreonine; by autocatalysis. A disordered region spans residues 579–618 (GAPGAEGFDSNMAGEANAGQNANNDDNVVDADYKVEDDEK). Residues 591–604 (AGEANAGQNANNDD) are compositionally biased toward low complexity.

It belongs to the heat shock protein 70 family.

In terms of biological role, acts as a chaperone. The sequence is that of Chaperone protein DnaK from Clostridium tetani (strain Massachusetts / E88).